The primary structure comprises 569 residues: Carboxylesterase 3 (569 aa).

Positions 1–24 (MRLHRLRARLNAVAFGLLLLLVHG) are cleaved as a signal peptide. Cys-95 and Cys-122 form a disulfide bridge. N-linked (GlcNAc...) asparagine glycosylation is present at Asn-103. Ser-227 (acyl-ester intermediate) is an active-site residue. Residues Cys-279 and Cys-290 are joined by a disulfide bond. Residues Glu-345 and His-458 each act as charge relay system in the active site. The Prevents secretion from ER signature appears at 566–569 (QEDL).

This sequence belongs to the type-B carboxylesterase/lipase family. Post-translationally, N-glycosylated.

It is found in the endoplasmic reticulum lumen. The catalysed reaction is a carboxylic ester + H2O = an alcohol + a carboxylate + H(+). Its function is as follows. Involved in the detoxification of xenobiotics and in the activation of ester and amide prodrugs. This Pongo abelii (Sumatran orangutan) protein is Carboxylesterase 3 (CES3).